Consider the following 415-residue polypeptide: Multidrug resistance protein MdtA (415 aa).

The signal sequence occupies residues 1–21 (MKSTVKKRGWVIAGIVVVALA). Positions 387-415 (AQTAADAAKPERGERAPTDSARAAKGARS) are disordered. Over residues 394–403 (AKPERGERAP) the composition is skewed to basic and acidic residues.

The protein belongs to the membrane fusion protein (MFP) (TC 8.A.1) family. Part of a tripartite efflux system composed of MdtA, MdtB and MdtC.

The protein localises to the cell inner membrane. The sequence is that of Multidrug resistance protein MdtA from Cronobacter turicensis (strain DSM 18703 / CCUG 55852 / LMG 23827 / z3032).